The chain runs to 197 residues: uncharacterized protein (197 aa).

The protein belongs to the NAD(P)H dehydrogenase (quinone) family.

This is an uncharacterized protein from Bacillus subtilis (strain 168).